The chain runs to 515 residues: Bifunctional purine biosynthesis protein PurH (515 aa).

Positions 1-145 (MTKRVLISVS…KNHASVTVVV (145 aa)) constitute an MGS-like domain.

It belongs to the PurH family.

The catalysed reaction is (6R)-10-formyltetrahydrofolate + 5-amino-1-(5-phospho-beta-D-ribosyl)imidazole-4-carboxamide = 5-formamido-1-(5-phospho-D-ribosyl)imidazole-4-carboxamide + (6S)-5,6,7,8-tetrahydrofolate. The enzyme catalyses IMP + H2O = 5-formamido-1-(5-phospho-D-ribosyl)imidazole-4-carboxamide. It functions in the pathway purine metabolism; IMP biosynthesis via de novo pathway; 5-formamido-1-(5-phospho-D-ribosyl)imidazole-4-carboxamide from 5-amino-1-(5-phospho-D-ribosyl)imidazole-4-carboxamide (10-formyl THF route): step 1/1. It participates in purine metabolism; IMP biosynthesis via de novo pathway; IMP from 5-formamido-1-(5-phospho-D-ribosyl)imidazole-4-carboxamide: step 1/1. This chain is Bifunctional purine biosynthesis protein PurH, found in Streptococcus pneumoniae (strain 70585).